The sequence spans 324 residues: Lipoyl synthase (324 aa).

Residues Cys65, Cys70, Cys76, Cys91, Cys95, Cys98, and Ser302 each coordinate [4Fe-4S] cluster. In terms of domain architecture, Radical SAM core spans 77-291 (WEDREATFLI…AQYAEGLGFA (215 aa)).

The protein belongs to the radical SAM superfamily. Lipoyl synthase family. [4Fe-4S] cluster serves as cofactor.

The protein localises to the cytoplasm. The catalysed reaction is [[Fe-S] cluster scaffold protein carrying a second [4Fe-4S](2+) cluster] + N(6)-octanoyl-L-lysyl-[protein] + 2 oxidized [2Fe-2S]-[ferredoxin] + 2 S-adenosyl-L-methionine + 4 H(+) = [[Fe-S] cluster scaffold protein] + N(6)-[(R)-dihydrolipoyl]-L-lysyl-[protein] + 4 Fe(3+) + 2 hydrogen sulfide + 2 5'-deoxyadenosine + 2 L-methionine + 2 reduced [2Fe-2S]-[ferredoxin]. It functions in the pathway protein modification; protein lipoylation via endogenous pathway; protein N(6)-(lipoyl)lysine from octanoyl-[acyl-carrier-protein]: step 2/2. Catalyzes the radical-mediated insertion of two sulfur atoms into the C-6 and C-8 positions of the octanoyl moiety bound to the lipoyl domains of lipoate-dependent enzymes, thereby converting the octanoylated domains into lipoylated derivatives. The sequence is that of Lipoyl synthase from Mycobacterium ulcerans (strain Agy99).